The chain runs to 663 residues: Probable potassium transport system protein Kup (663 aa).

A disordered region spans residues methionine 1–alanine 23. 12 helical membrane-spanning segments follow: residues proline 81 to phenylalanine 101, leucine 137 to proline 157, proline 173 to isoleucine 193, valine 201 to valine 221, isoleucine 224 to alanine 244, tryptophan 248 to tyrosine 268, tryptophan 283 to leucine 303, leucine 315 to valine 335, isoleucine 373 to phenylalanine 393, leucine 399 to histidine 419, alanine 433 to valine 453, and valine 455 to threonine 475.

The protein belongs to the HAK/KUP transporter (TC 2.A.72) family.

It localises to the cell inner membrane. The catalysed reaction is K(+)(in) + H(+)(in) = K(+)(out) + H(+)(out). Its function is as follows. Transport of potassium into the cell. Likely operates as a K(+):H(+) symporter. The protein is Probable potassium transport system protein Kup of Anaeromyxobacter sp. (strain Fw109-5).